Here is a 993-residue protein sequence, read N- to C-terminus: Testis-expressed protein 13C (993 aa).

3 disordered regions span residues 281–381 (QEET…SLKK), 520–547 (DSKS…SHSL), and 894–959 (FSKS…PVNW). A compositionally biased stretch (polar residues) spans 325–335 (GMTSQGDSSSH). Residues 353 to 364 (SRSHSLEKKPVM) show a composition bias toward basic and acidic residues. Over residues 944 to 957 (ESQQQKPASCSSPV) the composition is skewed to polar residues. The RanBP2-type zinc finger occupies 955 to 984 (SPVNWACPWCNAMNFPRNKVCSKCKRVRMP).

Belongs to the TEX13 family.

In Homo sapiens (Human), this protein is Testis-expressed protein 13C.